A 272-amino-acid polypeptide reads, in one-letter code: Putative phosphoenolpyruvate synthase regulatory protein (272 aa).

152–159 (GVSRCGKT) provides a ligand contact to ADP.

Belongs to the pyruvate, phosphate/water dikinase regulatory protein family. PSRP subfamily.

It catalyses the reaction [pyruvate, water dikinase] + ADP = [pyruvate, water dikinase]-phosphate + AMP + H(+). The enzyme catalyses [pyruvate, water dikinase]-phosphate + phosphate + H(+) = [pyruvate, water dikinase] + diphosphate. Functionally, bifunctional serine/threonine kinase and phosphorylase involved in the regulation of the phosphoenolpyruvate synthase (PEPS) by catalyzing its phosphorylation/dephosphorylation. This Pseudomonas putida (strain W619) protein is Putative phosphoenolpyruvate synthase regulatory protein.